The primary structure comprises 747 residues: Protein FAM83C (747 aa).

A DUF1669 region spans residues 1–309; it reads MFGGPGPGVL…LYAESQPVEG (309 aa). Disordered stretches follow at residues 322–352, 374–412, 462–484, 517–550, 588–633, 646–672, and 692–715; these read LRPP…SSIK, TGVV…LYRA, LSRF…GRWV, AREV…SPSQ, NQSR…LGHS, GEGP…DEKR, and ARQG…DLVR. Low complexity predominate over residues 328–350; the sequence is ALAFRPDVPSPTSSLPSSTSLSS. The segment covering 390-402 has biased composition (polar residues); the sequence is GQPSLHRQLSDPN. Gly residues predominate over residues 697 to 707; it reads EPGGPKGGHLN.

The protein belongs to the FAM83 family. In terms of assembly, may interact with RAF1. In terms of processing, phosphorylated in vitro by CSNK1A1.

Its subcellular location is the cytoplasm. Its function is as follows. May play a role in MAPK signaling. In Homo sapiens (Human), this protein is Protein FAM83C.